A 634-amino-acid chain; its full sequence is Kelch-like protein 22 (634 aa).

Alanine 2 is modified (N-acetylalanine). Residues 50–117 enclose the BTB domain; sequence FDVVLVVEGR…IYTSELELSL (68 aa). Kelch repeat units follow at residues 299 to 349, 350 to 399, 400 to 446, 448 to 493, 494 to 544, and 545 to 593; these read CVVG…VLNN, FVYL…VVGK, YIYA…TLQG, MYIT…ALLD, KLFV…VLDN, and RIYV…VLTL. Phosphothreonine is present on threonine 463. Phosphotyrosine is present on tyrosine 466. Threonine 475 bears the Phosphothreonine mark. The tract at residues 600 to 634 is disordered; it reads EQPRGTPNRSQADADFASEVMSVSDWEEFDNSSED. Phosphothreonine is present on threonine 605. Acidic residues predominate over residues 624 to 634; sequence DWEEFDNSSED.

As to quaternary structure, component of the BCR(KLHL22) E3 ubiquitin ligase complex, at least composed of CUL3, KLHL22 and RBX1. Interacts with PLK1. Interacts with DEPDC5 (via DEP domain); the interaction depends on amino acid availability. Interacts with YWHAE; required for the nuclear localization of KLHL22 upon amino acid starvation.

Its subcellular location is the cytoplasm. The protein resides in the cytosol. It is found in the cytoskeleton. It localises to the microtubule organizing center. The protein localises to the centrosome. Its subcellular location is the spindle. The protein resides in the nucleus. It is found in the lysosome. It functions in the pathway protein modification; protein ubiquitination. Functionally, substrate-specific adapter of a BCR (BTB-CUL3-RBX1) E3 ubiquitin ligase complex required for chromosome alignment and localization of PLK1 at kinetochores. The BCR(KLHL22) ubiquitin ligase complex mediates monoubiquitination of PLK1, leading to PLK1 dissociation from phosphoreceptor proteins and subsequent removal from kinetochores, allowing silencing of the spindle assembly checkpoint (SAC) and chromosome segregation. Monoubiquitination of PLK1 does not lead to PLK1 degradation. The BCR(KLHL22) ubiquitin ligase complex is also responsible for the amino acid-stimulated 'Lys-48' polyubiquitination and proteasomal degradation of DEPDC5. Through the degradation of DEPDC5, releases the GATOR1 complex-mediated inhibition of the TORC1 pathway. It is therefore an amino acid-dependent activator within the amino acid-sensing branch of the TORC1 pathway, indirectly regulating different cellular processes including cell growth and autophagy. The chain is Kelch-like protein 22 from Rattus norvegicus (Rat).